The following is a 303-amino-acid chain: Probable 5-dehydro-4-deoxyglucarate dehydratase (303 aa).

Belongs to the DapA family.

It carries out the reaction 5-dehydro-4-deoxy-D-glucarate + H(+) = 2,5-dioxopentanoate + CO2 + H2O. The protein operates within carbohydrate acid metabolism; D-glucarate degradation; 2,5-dioxopentanoate from D-glucarate: step 2/2. The sequence is that of Probable 5-dehydro-4-deoxyglucarate dehydratase from Pseudomonas putida (strain W619).